We begin with the raw amino-acid sequence, 270 residues long: Glutamate racemase (270 aa).

Residues 7–8 and 39–40 each bind substrate; these read DS and YG. C70 functions as the Proton donor/acceptor in the catalytic mechanism. Residue 71–72 coordinates substrate; sequence NT. The Proton donor/acceptor role is filled by C194. 195-196 lines the substrate pocket; the sequence is TH.

It belongs to the aspartate/glutamate racemases family.

It catalyses the reaction L-glutamate = D-glutamate. It functions in the pathway cell wall biogenesis; peptidoglycan biosynthesis. Its function is as follows. Provides the (R)-glutamate required for cell wall biosynthesis. The chain is Glutamate racemase from Jannaschia sp. (strain CCS1).